Here is a 473-residue protein sequence, read N- to C-terminus: Ribulose bisphosphate carboxylase large chain (473 aa).

Asn116 and Thr166 together coordinate substrate. Lys168 (proton acceptor) is an active-site residue. Residue Lys170 participates in substrate binding. Mg(2+)-binding residues include Lys194, Asp196, and Glu197. Position 194 is an N6-carboxylysine (Lys194). His287 (proton acceptor) is an active-site residue. 3 residues coordinate substrate: Arg288, His320, and Ser372.

The protein belongs to the RuBisCO large chain family. Type I subfamily. In terms of assembly, heterohexadecamer of 8 large chains and 8 small chains. Mg(2+) serves as cofactor.

The catalysed reaction is 2 (2R)-3-phosphoglycerate + 2 H(+) = D-ribulose 1,5-bisphosphate + CO2 + H2O. The enzyme catalyses D-ribulose 1,5-bisphosphate + O2 = 2-phosphoglycolate + (2R)-3-phosphoglycerate + 2 H(+). Its function is as follows. RuBisCO catalyzes two reactions: the carboxylation of D-ribulose 1,5-bisphosphate, the primary event in carbon dioxide fixation, as well as the oxidative fragmentation of the pentose substrate. Both reactions occur simultaneously and in competition at the same active site. The polypeptide is Ribulose bisphosphate carboxylase large chain (Methylococcus capsulatus (strain ATCC 33009 / NCIMB 11132 / Bath)).